A 189-amino-acid chain; its full sequence is Inner membrane-spanning protein YciB (189 aa).

5 helical membrane passes run 4-24, 53-73, 76-96, 121-141, and 149-169; these read FFEFIPLIIFFVVFKTTDIYI, ITFGMVLVFGTLTIVLHDDVF, WKVTVVYALFSLALLVSQFFY, MAWALLFAVLSAVNVYVAFSL, and FKVFGLLAITLAFTLLSGLYI.

This sequence belongs to the YciB family.

It localises to the cell inner membrane. Its function is as follows. Plays a role in cell envelope biogenesis, maintenance of cell envelope integrity and membrane homeostasis. In Psychromonas ingrahamii (strain DSM 17664 / CCUG 51855 / 37), this protein is Inner membrane-spanning protein YciB.